We begin with the raw amino-acid sequence, 201 residues long: Recombination protein RecR (201 aa).

The segment at 57 to 72 (CRSCRTFTEEDECNIC) adopts a C4-type zinc-finger fold. A Toprim domain is found at 81–176 (GQLCVVEMPE…KVTRIAHGIP (96 aa)).

Belongs to the RecR family.

Its function is as follows. May play a role in DNA repair. It seems to be involved in an RecBC-independent recombinational process of DNA repair. It may act with RecF and RecO. The chain is Recombination protein RecR from Actinobacillus pleuropneumoniae serotype 5b (strain L20).